The primary structure comprises 145 residues: Large ribosomal subunit protein uL16 (145 aa).

A compositionally biased stretch (basic residues) spans 1–17; that stretch reads MLMPKRVKHRRVHRGRM. A disordered region spans residues 1 to 22; sequence MLMPKRVKHRRVHRGRMTGKAT.

This sequence belongs to the universal ribosomal protein uL16 family. Part of the 50S ribosomal subunit.

In terms of biological role, binds 23S rRNA and is also seen to make contacts with the A and possibly P site tRNAs. This chain is Large ribosomal subunit protein uL16, found in Ruminiclostridium cellulolyticum (strain ATCC 35319 / DSM 5812 / JCM 6584 / H10) (Clostridium cellulolyticum).